Reading from the N-terminus, the 1171-residue chain is Phytochrome B (1171 aa).

Low complexity predominate over residues 1–19; that stretch reads MASGSRATPTRSPSSARPA. The interval 1-53 is disordered; it reads MASGSRATPTRSPSSARPAAPRHQHHHSQSSGGSTSRAGGGGGGGGGGGGGAA. Residues 38–52 show a composition bias toward gly residues; sequence AGGGGGGGGGGGGGA. The GAF domain maps to 259–442; that stretch reads DVKLLCDTVV…AFGLQLNMEL (184 aa). Cys364 lines the phytochromobilin pocket. PAS domains follow at residues 661-732 and 795-866; these read VARE…LRGD and DYKA…MIVL. Residues 943 to 1161 enclose the Histidine kinase domain; sequence YIYQEIKNPL…FFHIVLELPQ (219 aa).

Belongs to the phytochrome family. Homodimer. Contains one covalently linked phytochromobilin chromophore.

Regulatory photoreceptor which exists in two forms that are reversibly interconvertible by light: the Pr form that absorbs maximally in the red region of the spectrum and the Pfr form that absorbs maximally in the far-red region. Photoconversion of Pr to Pfr induces an array of morphogenic responses, whereas reconversion of Pfr to Pr cancels the induction of those responses. Pfr controls the expression of a number of nuclear genes including those encoding the small subunit of ribulose-bisphosphate carboxylase, chlorophyll A/B binding protein, protochlorophyllide reductase, rRNA, etc. It also controls the expression of its own gene(s) in a negative feedback fashion. The polypeptide is Phytochrome B (PHYB) (Oryza sativa subsp. indica (Rice)).